The sequence spans 233 residues: Large ribosomal subunit protein uL1 (233 aa).

Belongs to the universal ribosomal protein uL1 family. As to quaternary structure, part of the 50S ribosomal subunit.

Functionally, binds directly to 23S rRNA. The L1 stalk is quite mobile in the ribosome, and is involved in E site tRNA release. In terms of biological role, protein L1 is also a translational repressor protein, it controls the translation of the L11 operon by binding to its mRNA. This Syntrophotalea carbinolica (strain DSM 2380 / NBRC 103641 / GraBd1) (Pelobacter carbinolicus) protein is Large ribosomal subunit protein uL1.